The primary structure comprises 311 residues: Nuclear hormone receptor family member nhr-111 (311 aa).

A DNA-binding region (nuclear receptor) is located at residues 39–115 (ITLCAVCGDT…KGMNKNAVQP (77 aa)). 2 NR C4-type zinc fingers span residues 42 to 62 (CAVC…CFGC) and 78 to 98 (CWNG…CKSC). The 196-residue stretch at 116-311 (ERTSHSYTVE…KACEIVISFL (196 aa)) folds into the NR LBD domain.

The protein belongs to the nuclear hormone receptor family.

It is found in the nucleus. Orphan nuclear receptor. The protein is Nuclear hormone receptor family member nhr-111 (nhr-111) of Caenorhabditis elegans.